A 442-amino-acid chain; its full sequence is Mannosylglycerate hydrolase (442 aa).

Substrate is bound by residues Y38, 42–45 (WSWD), Y90, Q116, and G176. The active-site Proton donor is D178. Residues R213 and 369-370 (YW) each bind substrate. The active-site Proton acceptor is the E413.

The protein belongs to the glycosyl hydrolase 63 family. As to quaternary structure, homodimer in solution.

The catalysed reaction is (2R)-2-O-(alpha-D-mannosyl)-glycerate + H2O = D-mannose + (R)-glycerate. The enzyme catalyses (2R)-2-O-(alpha-D-glucopyranosyl)-glycerate + H2O = (R)-glycerate + D-glucose. Its activity is regulated as follows. Activity is not stimulated by divalent cations and not affected in the presence of EDTA. Its function is as follows. Hydrolase that catalyzes the hydrolysis of mannosylglycerate (MG), a solute produced in response to osmotic stress in thermophiles, into mannose and glycerate. Can also hydrolyze glucosylglycerate (GG) to glucose and glycerate, with similar catalytic efficiency. Is highly specific for MG and GG, and cannot use mannosylglyceramide (MGA), glucosylglycerol, mannosylglucosylglycerate (MGG), glucosylglucosylglycerate (GGG) or trehalose as substrates. The polypeptide is Mannosylglycerate hydrolase (Rubrobacter radiotolerans (Arthrobacter radiotolerans)).